The primary structure comprises 406 residues: 11-beta-hydroxysteroid dehydrogenase type 2 (406 aa).

82 to 111 lines the NAD(+) pocket; the sequence is TRAVLITGCDSGFGKETAKKLDAMGFTVLA. Ser-219 is a substrate binding site. Tyr-232 acts as the Proton acceptor in catalysis. Residues 379–406 form a disordered region; that stretch reads GQPGATPAPDTAQDNPNPNPDPSLVGAR.

This sequence belongs to the short-chain dehydrogenases/reductases (SDR) family. As to quaternary structure, interacts with ligand-free cytoplasmic NR3C2. Highly expressed in the kidney.

It is found in the microsome. Its subcellular location is the endoplasmic reticulum. The enzyme catalyses an 11beta-hydroxysteroid + NAD(+) = an 11-oxosteroid + NADH + H(+). It carries out the reaction corticosterone + NAD(+) = 11-dehydrocorticosterone + NADH + H(+). The catalysed reaction is cortisol + NAD(+) = cortisone + NADH + H(+). It catalyses the reaction 11beta,17beta-dihydroxyandrost-4-ene-3-one + NAD(+) = 17beta-hydroxyandrost-4-ene-3,11-dione + NADH + H(+). The enzyme catalyses 11beta-hydroxyandrost-4-ene-3,17-dione + NAD(+) = androst-4-ene-3,11,17-trione + NADH + H(+). Its pathway is steroid metabolism. With respect to regulation, inhibited by carbenoloxone. In terms of biological role, catalyzes the conversion of biologically active 11beta-hydroxyglucocorticoids (11beta-hydroxysteroid) such as corticosterone, to inactive 11-ketoglucocorticoids (11-oxosteroid) such as 11-dehydrocorticosterone, in the presence of NAD(+). Functions as a dehydrogenase (oxidase), thereby decreasing the concentration of active glucocorticoids, thus protecting the nonselective mineralocorticoid receptor from occupation by glucocorticoids. Plays an important role in maintaining glucocorticoids balance during preimplantation and protects the fetus from excessive maternal corticosterone exposure. Catalyzes the oxidation of 11beta-hydroxytestosterone (11beta,17beta-dihydroxyandrost-4-ene-3-one) to 11-ketotestosterone (17beta-hydroxyandrost-4-ene-3,11-dione), a major bioactive androgen. Catalyzes the conversion of 11beta-hydroxyandrostenedione (11beta-hydroxyandrost-4-ene-3,17-dione) to 11-ketoandrostenedione (androst-4-ene-3,11,17-trione), which can be further metabolized to 11-ketotestosterone. Converts 7-beta-25-dihydroxycholesterol to 7-oxo-25-hydroxycholesterol in vitro. 7-beta-25-dihydroxycholesterol (not 7-oxo-25-hydroxycholesterol) acts as a ligand for the G-protein-coupled receptor (GPCR) Epstein-Barr virus-induced gene 2 (EBI2) and may thereby regulate immune cell migration. May protect ovulating oocytes and fertilizing spermatozoa from the adverse effects of cortisol. This is 11-beta-hydroxysteroid dehydrogenase type 2 (HSD11B2) from Oryctolagus cuniculus (Rabbit).